The following is a 238-amino-acid chain: Fatty acid metabolism regulator protein (238 aa).

One can recognise an HTH gntR-type domain in the interval 6 to 74; it reads QSPAGFAEEY…HGKPTKVNNF (69 aa). Residues 34–53 constitute a DNA-binding region (H-T-H motif); sequence ERELSELIGVTRTTLREVLQ.

Homodimer.

The protein resides in the cytoplasm. Functionally, multifunctional regulator of fatty acid metabolism. This chain is Fatty acid metabolism regulator protein, found in Erwinia tasmaniensis (strain DSM 17950 / CFBP 7177 / CIP 109463 / NCPPB 4357 / Et1/99).